The sequence spans 233 residues: 2,3,4,5-tetrahydropyridine-2,6-dicarboxylate N-acetyltransferase (233 aa).

This sequence belongs to the transferase hexapeptide repeat family. DapH subfamily.

It carries out the reaction (S)-2,3,4,5-tetrahydrodipicolinate + acetyl-CoA + H2O = L-2-acetamido-6-oxoheptanedioate + CoA. The protein operates within amino-acid biosynthesis; L-lysine biosynthesis via DAP pathway; LL-2,6-diaminopimelate from (S)-tetrahydrodipicolinate (acetylase route): step 1/3. In terms of biological role, catalyzes the transfer of an acetyl group from acetyl-CoA to tetrahydrodipicolinate. The chain is 2,3,4,5-tetrahydropyridine-2,6-dicarboxylate N-acetyltransferase from Petrotoga mobilis (strain DSM 10674 / SJ95).